A 213-amino-acid chain; its full sequence is Adenylate kinase (213 aa).

Residue 10–15 (GAGKGT) participates in ATP binding. Residues 30-59 (STGDMFRAAMANQTEMGVLAKSYIDKGDLV) form an NMP region. AMP contacts are provided by residues Thr31, Arg36, 57–59 (DLV), 86–89 (GYPR), and Gln93. An LID region spans residues 127–160 (GRIINKKTGETFHKIFNPPVGDYKEEDFYQREDD). ATP is bound by residues Arg128 and 137-138 (TF). Residues Arg157 and Arg168 each contribute to the AMP site. Lys196 is a binding site for ATP.

It belongs to the adenylate kinase family. As to quaternary structure, monomer.

The protein localises to the cytoplasm. The enzyme catalyses AMP + ATP = 2 ADP. It functions in the pathway purine metabolism; AMP biosynthesis via salvage pathway; AMP from ADP: step 1/1. Catalyzes the reversible transfer of the terminal phosphate group between ATP and AMP. Plays an important role in cellular energy homeostasis and in adenine nucleotide metabolism. In Streptococcus equi subsp. equi (strain 4047), this protein is Adenylate kinase.